Consider the following 227-residue polypeptide: Ribosomal RNA large subunit methyltransferase E (227 aa).

Residues Gly78, Trp80, Asp103, Asp119, and Asp143 each contribute to the S-adenosyl-L-methionine site. Lys183 serves as the catalytic Proton acceptor.

It belongs to the class I-like SAM-binding methyltransferase superfamily. RNA methyltransferase RlmE family.

The protein resides in the cytoplasm. The enzyme catalyses uridine(2552) in 23S rRNA + S-adenosyl-L-methionine = 2'-O-methyluridine(2552) in 23S rRNA + S-adenosyl-L-homocysteine + H(+). In terms of biological role, specifically methylates the uridine in position 2552 of 23S rRNA at the 2'-O position of the ribose in the fully assembled 50S ribosomal subunit. The sequence is that of Ribosomal RNA large subunit methyltransferase E from Rickettsia canadensis (strain McKiel).